Reading from the N-terminus, the 104-residue chain is MASTQKIRIRLKSYDHRLIDASAKQIVETAKRAGAQVKGPIPLPVKKEIYTVLISPHVNKDARDQYEMRTHKRIMDIIDPTDKTVDALMKLDLAAGVDVKIELQ.

Belongs to the universal ribosomal protein uS10 family. Part of the 30S ribosomal subunit.

Involved in the binding of tRNA to the ribosomes. The sequence is that of Small ribosomal subunit protein uS10 from Dichelobacter nodosus (strain VCS1703A).